Reading from the N-terminus, the 179-residue chain is Insulin-like growth factor 2 (179 aa).

An N-terminal signal peptide occupies residues 1-24 (MGITAGKSMLALLAFLAFASCCYA). The b stretch occupies residues 25 to 52 (AYRPSETLCGGELVDTLQFVCGDRGFYF). 3 cysteine pairs are disulfide-bonded: cysteine 33/cysteine 71, cysteine 45/cysteine 84, and cysteine 70/cysteine 75. The tract at residues 53-64 (SRPSSRINRRSR) is c. Residues 65–85 (GIVEECCFRSCDLALLETYCA) form an a region. Residues 86–91 (APAKSE) form a d region. Residues 92–179 (RDVSASTTVL…GGASSEASSD (88 aa)) constitute a propeptide, e peptide. Threonine 106 carries an O-linked (GalNAc...) threonine glycan. Residue serine 154 is glycosylated (O-linked (GalNAc...) serine). The interval 160 to 179 (ALPTQDPATHGGASSEASSD) is disordered. O-linked (GalNAc...) threonine glycosylation is present at threonine 163.

This sequence belongs to the insulin family. In terms of assembly, interacts with MYORG; this interaction is required for IGF2 secretion. Interacts with integrins ITGAV:ITGB3 and ITGA6:ITGB4; integrin-binding is required for IGF2 signaling. Interacts with IGFBP2. In terms of processing, proteolytically processed by PCSK4, proIGF2 is cleaved at Arg-128 and Arg-92 to generate big-IGF2 and mature IGF2.

It localises to the secreted. Its function is as follows. The insulin-like growth factors possess growth-promoting activity. Major fetal growth hormone in mammals. Plays a key role in regulating fetoplacental development. IGF2 is influenced by placental lactogen. Also involved in tissue differentiation. In adults, involved in glucose metabolism in adipose tissue, skeletal muscle and liver. Acts as a ligand for integrin which is required for IGF2 signaling. Positively regulates myogenic transcription factor MYOD1 function by facilitating the recruitment of transcriptional coactivators, thereby controlling muscle terminal differentiation. Inhibits myoblast differentiation and modulates metabolism via increasing the mitochondrial respiration rate. Preptin undergoes glucose-mediated co-secretion with insulin, and acts as a physiological amplifier of glucose-mediated insulin secretion. Exhibits osteogenic properties by increasing osteoblast mitogenic activity through phosphoactivation of MAPK1 and MAPK3. This chain is Insulin-like growth factor 2, found in Ovis aries (Sheep).